Consider the following 343-residue polypeptide: Endoglucanase C (343 aa).

Glu140 acts as the Proton donor in catalysis. The active-site Nucleophile is Glu280.

It belongs to the glycosyl hydrolase 5 (cellulase A) family.

It carries out the reaction Endohydrolysis of (1-&gt;4)-beta-D-glucosidic linkages in cellulose, lichenin and cereal beta-D-glucans.. The protein operates within glycan metabolism; cellulose degradation. Its function is as follows. This enzyme catalyzes the endohydrolysis of 1,4-beta-glucosidic linkages in cellulose, lichenin and cereal beta-D-glucans. In Acetivibrio thermocellus (Hungateiclostridium thermocellum), this protein is Endoglucanase C (celC).